A 448-amino-acid polypeptide reads, in one-letter code: Squalene synthase ERG9 (448 aa).

Residues 428–448 (CNVVLFGIGALILSLIYFVLY) form a helical membrane-spanning segment.

Belongs to the phytoene/squalene synthase family. Mg(2+) serves as cofactor.

It localises to the endoplasmic reticulum membrane. The protein resides in the microsome. The catalysed reaction is 2 (2E,6E)-farnesyl diphosphate + NADPH + H(+) = squalene + 2 diphosphate + NADP(+). It carries out the reaction 2 (2E,6E)-farnesyl diphosphate + NADH + H(+) = squalene + 2 diphosphate + NAD(+). It participates in terpene metabolism; lanosterol biosynthesis; lanosterol from farnesyl diphosphate: step 1/3. Functionally, squalene synthase; part of the third module of ergosterol biosynthesis pathway that includes the late steps of the pathway. ERG9 produces squalene from 2 farnesyl pyrophosphate moieties. The third module or late pathway involves the ergosterol synthesis itself through consecutive reactions that mainly occur in the endoplasmic reticulum (ER) membrane. Firstly, the squalene synthase ERG9 catalyzes the condensation of 2 farnesyl pyrophosphate moieties to form squalene, which is the precursor of all steroids. Squalene synthase is crucial for balancing the incorporation of farnesyl diphosphate (FPP) into sterol and nonsterol isoprene synthesis. Secondly, the squalene epoxidase ERG1 catalyzes the stereospecific oxidation of squalene to (S)-2,3-epoxysqualene, which is considered to be a rate-limiting enzyme in steroid biosynthesis. Then, the lanosterol synthase ERG7 catalyzes the cyclization of (S)-2,3 oxidosqualene to lanosterol, a reaction that forms the sterol core. In the next steps, lanosterol is transformed to zymosterol through a complex process involving various demethylation, reduction and desaturation reactions. The lanosterol 14-alpha-demethylase ERG11 (also known as CYP51) catalyzes C14-demethylation of lanosterol to produce 4,4'-dimethyl cholesta-8,14,24-triene-3-beta-ol, which is critical for ergosterol biosynthesis. The C-14 reductase ERG24 reduces the C14=C15 double bond of 4,4-dimethyl-cholesta-8,14,24-trienol to produce 4,4-dimethyl-cholesta-8,24-dienol. 4,4-dimethyl-cholesta-8,24-dienol is substrate of the C-4 demethylation complex ERG25-ERG26-ERG27 in which ERG25 catalyzes the three-step monooxygenation required for the demethylation of 4,4-dimethyl and 4alpha-methylsterols, ERG26 catalyzes the oxidative decarboxylation that results in a reduction of the 3-beta-hydroxy group at the C-3 carbon to an oxo group, and ERG27 is responsible for the reduction of the keto group on the C-3. ERG28 has a role as a scaffold to help anchor ERG25, ERG26 and ERG27 to the endoplasmic reticulum and ERG29 regulates the activity of the iron-containing C4-methylsterol oxidase ERG25. Then, the sterol 24-C-methyltransferase ERG6 catalyzes the methyl transfer from S-adenosyl-methionine to the C-24 of zymosterol to form fecosterol. The C-8 sterol isomerase ERG2 catalyzes the reaction which results in unsaturation at C-7 in the B ring of sterols and thus converts fecosterol to episterol. The sterol-C5-desaturase ERG3 then catalyzes the introduction of a C-5 double bond in the B ring to produce 5-dehydroepisterol. The C-22 sterol desaturase ERG5 further converts 5-dehydroepisterol into ergosta-5,7,22,24(28)-tetraen-3beta-ol by forming the C-22(23) double bond in the sterol side chain. Finally, ergosta-5,7,22,24(28)-tetraen-3beta-ol is substrate of the C-24(28) sterol reductase ERG4 to produce ergosterol. The sequence is that of Squalene synthase ERG9 from Candida albicans (strain SC5314 / ATCC MYA-2876) (Yeast).